The primary structure comprises 371 residues: NADP-dependent oxidoreductase lnaE (371 aa).

NADP(+) contacts are provided by residues 172-175 (DEIG), lysine 198, tyrosine 214, asparagine 237, 277-283 (YGTIAEQ), and 307-309 (FGL).

The protein belongs to the NADP-dependent oxidoreductase L4BD family.

It participates in secondary metabolite biosynthesis. Its function is as follows. NADP-dependent oxidoreductase; part of the lna gene cluster that mediates the biosynthesis of diastereomeric piperazines. Lna and lnb clusters encode sets of enzymes that produce overlapping sets of previously undescribed metabolites such as piperazinomycin-like metabolites or morpholine. The lna and lnb biosynthetic pathways appear to be part of a signaling network that controls the formation of sclerotia, a resilient overwintering structure. One primary function of the non-canonical nonribosomal peptide synthetases lnaA and lnbA consists in the reduction of L-tyrosine. The presence in the clusters of tailoring enzymes such as the oxidoreductases lnaB, lnbB, lnaE or lnbE, as well as of the cytochrome P450 monooxygenases lnaC, lnaD, or lnbC, might explain formation of various diastereomeric piperazines. The sequence is that of NADP-dependent oxidoreductase lnaE from Aspergillus flavus (strain ATCC 200026 / FGSC A1120 / IAM 13836 / NRRL 3357 / JCM 12722 / SRRC 167).